The chain runs to 128 residues: MNLIQTLEQEEIARLNKTIPEFAPGDTVIVSVNVVEGNRKRVQAYEGVVIAKRNRGLNSGFTVRKISSGEGVERTFQTYSPLIASIEVKRRGDVRRAKLYYLRDRSGKSARIKEKLPSRVNKAAATAA.

This sequence belongs to the bacterial ribosomal protein bL19 family.

Functionally, this protein is located at the 30S-50S ribosomal subunit interface and may play a role in the structure and function of the aminoacyl-tRNA binding site. This is Large ribosomal subunit protein bL19 from Paracidovorax citrulli (strain AAC00-1) (Acidovorax citrulli).